A 182-amino-acid chain; its full sequence is uncharacterized protein (182 aa).

The protein resides in the mitochondrion. This is an uncharacterized protein from Schizosaccharomyces pombe (strain 972 / ATCC 24843) (Fission yeast).